Reading from the N-terminus, the 522-residue chain is Cytochrome b mRNA maturase bI3 (522 aa).

The Mitochondrial matrix portion of the chain corresponds to 1–31; that stretch reads MTIRKSNPYLSLVNSYLMDSPQPSSMNYWWN. Residues 1–163 are cytochrome b; it reads MTIRKSNPYL…MPFMGGDLVP (163 aa). A helical transmembrane segment spans residues 32–52; the sequence is VGSLLGLCLVMQMASGMFLAM. At 53-84 the chain is on the mitochondrial intermembrane side; the sequence is HYSSSMELAFNSVEHMMRDVNAGWLMRYIHAN. A helical transmembrane segment spans residues 85–105; that stretch reads GASFFFMCLYLHMGKALYYGS. Residues 106 to 110 are Mitochondrial matrix-facing; the sequence is YKSPR. The helical transmembrane segment at 111–131 threads the bilayer; sequence VLVWSMGVMMFMLTMATAFMG. The Mitochondrial intermembrane segment spans residues 132 to 154; that stretch reads YCLVYGQMSHWGATVITNLLSAM. Residues 155–175 traverse the membrane as a helical segment; the sequence is PFMGGDLVPLSIILSLYLLYI. The segment at 164–522 is maturase; sequence LSIILSLYLL…PYMSWHQKEQ (359 aa). Over 176–522 the chain is Mitochondrial matrix; sequence SLKTFMKMIF…PYMSWHQKEQ (347 aa).

The protein in the N-terminal section; belongs to the cytochrome b family. In the C-terminal section; belongs to the LAGLIDADG endonuclease family.

It is found in the mitochondrion inner membrane. Mitochondrial mRNA maturase required for splicing of intron 3 of the cytochrome b (COB) gene, containing its own coding sequence. This is Cytochrome b mRNA maturase bI3 (bI3) from Debaryomyces hansenii (strain ATCC 36239 / CBS 767 / BCRC 21394 / JCM 1990 / NBRC 0083 / IGC 2968) (Yeast).